Consider the following 497-residue polypeptide: tRNA-2-methylthio-N(6)-dimethylallyladenosine synthase (497 aa).

A disordered region spans residues 1-50 (MTGTSNIPTHGKEHKDAPALLPLPAPNPHHTHAAHPGDPSHDRPPSRGKL). Residues 48–165 (GKLFIKTHGC…LPDMIRARRE (118 aa)) form the MTTase N-terminal domain. [4Fe-4S] cluster contacts are provided by Cys-57, Cys-94, Cys-128, Cys-202, Cys-206, and Cys-209. A Radical SAM core domain is found at 188–430 (RAEGPSAFVS…QKHINAYAAD (243 aa)). The region spanning 433 to 496 (KRMIGTVQTV…TNSLRGRVHT (64 aa)) is the TRAM domain.

This sequence belongs to the methylthiotransferase family. MiaB subfamily. In terms of assembly, monomer. It depends on [4Fe-4S] cluster as a cofactor.

It is found in the cytoplasm. It carries out the reaction N(6)-dimethylallyladenosine(37) in tRNA + (sulfur carrier)-SH + AH2 + 2 S-adenosyl-L-methionine = 2-methylsulfanyl-N(6)-dimethylallyladenosine(37) in tRNA + (sulfur carrier)-H + 5'-deoxyadenosine + L-methionine + A + S-adenosyl-L-homocysteine + 2 H(+). Its function is as follows. Catalyzes the methylthiolation of N6-(dimethylallyl)adenosine (i(6)A), leading to the formation of 2-methylthio-N6-(dimethylallyl)adenosine (ms(2)i(6)A) at position 37 in tRNAs that read codons beginning with uridine. This Xylella fastidiosa (strain M12) protein is tRNA-2-methylthio-N(6)-dimethylallyladenosine synthase.